A 156-amino-acid chain; its full sequence is Putative pre-16S rRNA nuclease (156 aa).

The protein belongs to the YqgF nuclease family.

Its subcellular location is the cytoplasm. In terms of biological role, could be a nuclease involved in processing of the 5'-end of pre-16S rRNA. This chain is Putative pre-16S rRNA nuclease, found in Gloeobacter violaceus (strain ATCC 29082 / PCC 7421).